Here is a 454-residue protein sequence, read N- to C-terminus: MPRMFGTDGVRGLANRDLTAQLALDLGDAAVRVLGDDGGRETNRHRALIGRDTRVSGDFLSHALAAGMSAGGFDVIDAGIIPTPGVAFLTSVLNVEMGAVISASHNPMPDNGIKFFARGGFKLPDTKEDEIEAVLGQDWERPTGAGVGRVSHDTTTATNLYIDHLVSAIAPEGNEQPLKGLKVVADCANGATSVVAPEALRRAGADVIVINASPDGYNINKNAGSTHPESMQAMVRASGADLGVAFDGDADRCLAADAEGNMVNGDQIMGILARAKKREGKLNHDTLVVTVMSNLGLKLALKEMGIDTVQTNVGDRYVLEEMLRGDYSLGGEQSGHVINREFATTGDGTLTALTLCNEVVKSGKSLKELAADFPQLPQQLINVPNVDKMAAKTNKAVLEAVAREEELLGDTGRVLLRPSGTEPLVRVMAEAATQEQADEVTARLAQIVADELAL.

The active-site Phosphoserine intermediate is the Ser104. Residues Ser104, Asp247, Asp249, and Asp251 each coordinate Mg(2+). A Phosphoserine modification is found at Ser104.

This sequence belongs to the phosphohexose mutase family. Requires Mg(2+) as cofactor. Activated by phosphorylation.

The enzyme catalyses alpha-D-glucosamine 1-phosphate = D-glucosamine 6-phosphate. In terms of biological role, catalyzes the conversion of glucosamine-6-phosphate to glucosamine-1-phosphate. This chain is Phosphoglucosamine mutase, found in Bifidobacterium animalis subsp. lactis (strain AD011).